A 207-amino-acid polypeptide reads, in one-letter code: Small ribosomal subunit protein uS4c (207 aa).

Residues 92–155 (MRLDNILFRL…TYQSILSKRI (64 aa)) enclose the S4 RNA-binding domain.

This sequence belongs to the universal ribosomal protein uS4 family. As to quaternary structure, part of the 30S ribosomal subunit. Contacts protein S5. The interaction surface between S4 and S5 is involved in control of translational fidelity.

The protein resides in the plastid. It is found in the chloroplast. Functionally, one of the primary rRNA binding proteins, it binds directly to 16S rRNA where it nucleates assembly of the body of the 30S subunit. Its function is as follows. With S5 and S12 plays an important role in translational accuracy. The polypeptide is Small ribosomal subunit protein uS4c (rps4) (Equisetum giganteum (Giant horsetail)).